We begin with the raw amino-acid sequence, 103 residues long: NAD(P)H-quinone oxidoreductase subunit 4L, organellar chromatophore (103 aa).

3 consecutive transmembrane segments (helical) span residues 3–23 (IMLE…VWGL), 32–52 (VLMS…AFSN), and 63–83 (VFAI…LAIL).

Belongs to the complex I subunit 4L family. NDH is composed of at least 16 different subunits, 5 of which are encoded in the nucleus.

Its subcellular location is the plastid. The protein localises to the organellar chromatophore thylakoid membrane. It catalyses the reaction a plastoquinone + NADH + (n+1) H(+)(in) = a plastoquinol + NAD(+) + n H(+)(out). The catalysed reaction is a plastoquinone + NADPH + (n+1) H(+)(in) = a plastoquinol + NADP(+) + n H(+)(out). Functionally, NDH shuttles electrons from NAD(P)H:plastoquinone, via FMN and iron-sulfur (Fe-S) centers, to quinones in the photosynthetic chain and possibly in a chloroplast respiratory chain. The immediate electron acceptor for the enzyme in this species is believed to be plastoquinone. Couples the redox reaction to proton translocation, and thus conserves the redox energy in a proton gradient. This Paulinella chromatophora protein is NAD(P)H-quinone oxidoreductase subunit 4L, organellar chromatophore.